The sequence spans 416 residues: Gamma-glutamyl phosphate reductase (416 aa).

It belongs to the gamma-glutamyl phosphate reductase family.

Its subcellular location is the cytoplasm. The enzyme catalyses L-glutamate 5-semialdehyde + phosphate + NADP(+) = L-glutamyl 5-phosphate + NADPH + H(+). The protein operates within amino-acid biosynthesis; L-proline biosynthesis; L-glutamate 5-semialdehyde from L-glutamate: step 2/2. Functionally, catalyzes the NADPH-dependent reduction of L-glutamate 5-phosphate into L-glutamate 5-semialdehyde and phosphate. The product spontaneously undergoes cyclization to form 1-pyrroline-5-carboxylate. The polypeptide is Gamma-glutamyl phosphate reductase (Actinobacillus succinogenes (strain ATCC 55618 / DSM 22257 / CCUG 43843 / 130Z)).